Here is a 361-residue protein sequence, read N- to C-terminus: uncharacterized protein (361 aa).

This is an uncharacterized protein from Acanthamoeba polyphaga (Amoeba).